Reading from the N-terminus, the 265-residue chain is MEMO1 family protein Mbar_A1422 (265 aa).

This sequence belongs to the MEMO1 family.

This chain is MEMO1 family protein Mbar_A1422, found in Methanosarcina barkeri (strain Fusaro / DSM 804).